We begin with the raw amino-acid sequence, 214 residues long: Thymidylate kinase (214 aa).

10–17 provides a ligand contact to ATP; it reads GPDGAGKT.

The protein belongs to the thymidylate kinase family.

It catalyses the reaction dTMP + ATP = dTDP + ADP. Its function is as follows. Phosphorylation of dTMP to form dTDP in both de novo and salvage pathways of dTTP synthesis. In Lacticaseibacillus casei (strain BL23) (Lactobacillus casei), this protein is Thymidylate kinase.